The primary structure comprises 267 residues: Lyso-ornithine lipid O-acyltransferase (267 aa).

The helical transmembrane segment at 7 to 27 threads the bilayer; it reads IFLVVAAMVALSLSLIPFQYL.

It belongs to the 1-acyl-sn-glycerol-3-phosphate acyltransferase family. OlsA subfamily.

It is found in the membrane. It carries out the reaction a lyso-ornithine lipid + a fatty acyl-[ACP] = an N(2)-[(3R)-3-(acyloxy)acyl]-L-ornithine lipid + holo-[ACP]. Its pathway is lipid metabolism. Functionally, catalyzes the second step in the formation of ornithine lipids, which are phosphorus-free membrane lipids. Uses acyl-acyl carrier protein (acyl-AcpP) as an acyl donor and converts lyso-ornithine lipid (LOL) into ornithine lipid (OL). This Brucella abortus (strain 2308) protein is Lyso-ornithine lipid O-acyltransferase.